A 227-amino-acid polypeptide reads, in one-letter code: MQFKNVALAASVAALSATASAEGYTPGEPWSTLTPTGSISCGAAEYTTTFGIAVQAITSSKAKRDVISQIGDGQVQATSAATAQATDSQAQATTTATPTSSEKISSSASKTSTNATSSSCATPSLKDSSCKNSGTLELTLKDGVLTDAKGRIGSIVANRQFQFDGPPPQAGAIYAAGWSITEDGYLALGDSDVFYQCLSGNFYNLYDQNVAEQCSAIHLEAVSLVDC.

The first 21 residues, 1 to 21, serve as a signal peptide directing secretion; the sequence is MQFKNVALAASVAALSATASA. A propeptide spanning residues 22–64 is cleaved from the precursor; sequence EGYTPGEPWSTLTPTGSISCGAAEYTTTFGIAVQAITSSKAKR. Residues 65-78 form a PIR1/2/3 repeat; the sequence is DVISQIGDGQVQAT. O-linked (Man) serine glycosylation is present at Ser68. A glycan (O-linked (Man) threonine) is linked at Thr78. The span at 83-124 shows a compositional bias: low complexity; sequence AQATDSQAQATTTATPTSSEKISSSASKTSTNATSSSCATPS. A disordered region spans residues 83 to 127; sequence AQATDSQAQATTTATPTSSEKISSSASKTSTNATSSSCATPSLKD. Residues Ser105, Ser106, Ser107, and Ser109 are each glycosylated (O-linked (Man) serine). O-linked (Man) threonine glycosylation is present at Thr111. Residue Ser112 is glycosylated (O-linked (Man) serine). Thr113 is a glycosylation site (O-linked (Man) threonine). An N-linked (GlcNAc...) asparagine glycan is attached at Asn114. The O-linked (Man) threonine glycan is linked to Thr116. Ser117 and Ser118 each carry an O-linked (Man) serine glycan.

It belongs to the PIR protein family. In terms of processing, covalently linked to beta-1,3-glucan of the inner cell wall layer via an alkali-sensitive ester linkage between the gamma-carboxyl group of glutamic acid, arising from Gln-74 within the PIR1/2/3 repeat, and hydroxyl groups of glucoses of beta-1,3-glucan chains. Extensively O-mannosylated. Also N-glycosylated.

The protein resides in the secreted. It is found in the cell wall. Its function is as follows. Component of the outer cell wall layer. Required for stability of the cell wall and for optimal growth. Required for resistance against several antifungal and cell wall-perturbing agents. This chain is Cell wall mannoprotein CIS3 (CIS3), found in Saccharomyces cerevisiae (strain ATCC 204508 / S288c) (Baker's yeast).